We begin with the raw amino-acid sequence, 240 residues long: 6-phosphogluconolactonase (240 aa).

It belongs to the glucosamine/galactosamine-6-phosphate isomerase family. 6-phosphogluconolactonase subfamily.

It carries out the reaction 6-phospho-D-glucono-1,5-lactone + H2O = 6-phospho-D-gluconate + H(+). It functions in the pathway carbohydrate degradation; pentose phosphate pathway; D-ribulose 5-phosphate from D-glucose 6-phosphate (oxidative stage): step 2/3. Its function is as follows. Hydrolysis of 6-phosphogluconolactone to 6-phosphogluconate. This is 6-phosphogluconolactonase (pgl) from Nostoc sp. (strain PCC 7120 / SAG 25.82 / UTEX 2576).